The following is a 381-amino-acid chain: Putative 8-amino-7-oxononanoate synthase (381 aa).

Arginine 22 serves as a coordination point for substrate. A pyridoxal 5'-phosphate-binding site is contributed by 109–110 (GF). Residue histidine 134 participates in substrate binding. Pyridoxal 5'-phosphate-binding positions include serine 182, 207–210 (DDAH), and 233–236 (TLSK). Lysine 236 carries the N6-(pyridoxal phosphate)lysine modification. Threonine 345 is a binding site for substrate.

Belongs to the class-II pyridoxal-phosphate-dependent aminotransferase family. BioF subfamily. As to quaternary structure, homodimer. It depends on pyridoxal 5'-phosphate as a cofactor.

It carries out the reaction 6-carboxyhexanoyl-[ACP] + L-alanine + H(+) = (8S)-8-amino-7-oxononanoate + holo-[ACP] + CO2. It functions in the pathway cofactor biosynthesis; biotin biosynthesis. In terms of biological role, catalyzes the decarboxylative condensation of pimeloyl-[acyl-carrier protein] and L-alanine to produce 8-amino-7-oxononanoate (AON), [acyl-carrier protein], and carbon dioxide. The polypeptide is Putative 8-amino-7-oxononanoate synthase (bioF) (Acidiphilium cryptum (strain JF-5)).